A 373-amino-acid polypeptide reads, in one-letter code: Nodulation protein NolL (373 aa).

Helical transmembrane passes span 27–47 (DFAK…QYLI), 62–82 (SIYM…SSGA), 98–118 (QLLL…SAVI), 140–160 (WFIW…TFNR), 164–184 (WIIS…SITP), 212–232 (RYKW…FLGW), 253–273 (QVFL…QSMF), 286–306 (RFVA…QGAV), and 324–344 (RITF…AIRS).

It belongs to the acyltransferase 3 family.

It localises to the cell membrane. Its function is as follows. Thought to be an acetyltransferase that modifies the fucose of the nod factor. The polypeptide is Nodulation protein NolL (nolL) (Mesorhizobium japonicum (strain LMG 29417 / CECT 9101 / MAFF 303099) (Mesorhizobium loti (strain MAFF 303099))).